Here is a 60-residue protein sequence, read N- to C-terminus: Large ribosomal subunit protein bL32 (60 aa).

Positions 1–27 (MAVPRNRLSNARKNSKRAHHAKKPKSL) are disordered. Residues 13–25 (KNSKRAHHAKKPK) are compositionally biased toward basic residues.

This sequence belongs to the bacterial ribosomal protein bL32 family.

The protein is Large ribosomal subunit protein bL32 of Protochlamydia amoebophila (strain UWE25).